The primary structure comprises 225 residues: UPF0758 protein SO_4248 (225 aa).

One can recognise an MPN domain in the interval 102–224 (VLTNPDLTRD…IVSFAERGWI (123 aa)). The Zn(2+) site is built by His173, His175, and Asp186. Residues 173-186 (HNHPSGIAEPSQAD) carry the JAMM motif motif.

Belongs to the UPF0758 family.

This is UPF0758 protein SO_4248 from Shewanella oneidensis (strain ATCC 700550 / JCM 31522 / CIP 106686 / LMG 19005 / NCIMB 14063 / MR-1).